The following is a 210-amino-acid chain: Probable transcriptional regulator ycf29 (210 aa).

The Response regulatory domain occupies Asn3–Leu119. The residue at position 52 (Asp52) is a 4-aspartylphosphate. Positions Ser142 to Asn207 constitute an HTH luxR-type domain.

The protein localises to the plastid. Its subcellular location is the cyanelle. The polypeptide is Probable transcriptional regulator ycf29 (ycf29) (Cyanophora paradoxa).